The following is a 496-amino-acid chain: Glutamate--tRNA ligase (496 aa).

The 'HIGH' region signature appears at 12–22; the sequence is PSPTGHLHIGN. Positions 259 to 263 match the 'KMSKS' region motif; that stretch reads KLSKR. ATP is bound at residue Lys262.

This sequence belongs to the class-I aminoacyl-tRNA synthetase family. Glutamate--tRNA ligase type 1 subfamily. As to quaternary structure, monomer.

The protein localises to the cytoplasm. The catalysed reaction is tRNA(Glu) + L-glutamate + ATP = L-glutamyl-tRNA(Glu) + AMP + diphosphate. In terms of biological role, catalyzes the attachment of glutamate to tRNA(Glu) in a two-step reaction: glutamate is first activated by ATP to form Glu-AMP and then transferred to the acceptor end of tRNA(Glu). The polypeptide is Glutamate--tRNA ligase (Lactiplantibacillus plantarum (strain ATCC BAA-793 / NCIMB 8826 / WCFS1) (Lactobacillus plantarum)).